A 159-amino-acid chain; its full sequence is Small ribosomal subunit protein uS17y (159 aa).

It belongs to the universal ribosomal protein uS17 family.

It is found in the cytoplasm. The protein is Small ribosomal subunit protein uS17y (RPS11B) of Arabidopsis thaliana (Mouse-ear cress).